Reading from the N-terminus, the 137-residue chain is Translation initiation factor 2 subunit beta (137 aa).

The protein belongs to the eIF-2-beta/eIF-5 family. Heterotrimer composed of an alpha, a beta and a gamma chain.

In terms of biological role, eIF-2 functions in the early steps of protein synthesis by forming a ternary complex with GTP and initiator tRNA. The chain is Translation initiation factor 2 subunit beta (eif2b) from Archaeoglobus fulgidus (strain ATCC 49558 / DSM 4304 / JCM 9628 / NBRC 100126 / VC-16).